A 354-amino-acid polypeptide reads, in one-letter code: Guanine nucleotide-binding protein alpha-2 subunit (354 aa).

One can recognise a G-alpha domain in the interval 33 to 354 (KIYKVLLLGA…QHSLKEAGMF (322 aa)). A G1 motif region spans residues 36–49 (KVLLLGASDSGKST). Residues aspartate 44, serine 45, glycine 46, lysine 47, serine 48, threonine 49, aspartate 148, leucine 173, threonine 179, glycine 201, asparagine 269, lysine 270, aspartate 272, and alanine 326 each contribute to the GTP site. Serine 48 contacts Mg(2+). The G2 motif stretch occupies residues 171-179 (DILRSRNST). Threonine 179 is a binding site for Mg(2+). Residues 194 to 203 (IRMFDVGGQR) form a G3 motif region. Residues 265–272 (ILFLNKFD) are G4 motif. Positions 324 to 329 (TTAVDT) are G5 motif.

This sequence belongs to the G-alpha family. As to quaternary structure, g proteins are composed of 3 units; alpha, beta and gamma. Binding of the beta-gamma subunit complex (git5-git11) to the alpha subunit (gpa2) facilitates interaction with GPCR git3. Interacts with GPCR git3; the interaction is direct and leads to activation of gpa2 upon glucose stimulation. Interacts with adenylate cyclase cyr1 (via N-terminus); the interaction is direct and serves to activate adenylate cyclase and cAMP-PKA signaling, to repress sexual development and gluconeogenesis. Requires Mg(2+) as cofactor.

The protein resides in the cell membrane. Its function is as follows. Alpha subunit of the heterotrimeric guanine nucleotide-binding protein (G protein) involved in glucose-induced cAMP signaling. Binds to its cognate transmembrane receptor git3, which senses extracellular glucose, and activates cAMP-PKA signaling to repress sexual development and gluconeogenesis. This is Guanine nucleotide-binding protein alpha-2 subunit from Schizosaccharomyces pombe (strain 972 / ATCC 24843) (Fission yeast).